A 706-amino-acid chain; its full sequence is DNA helicase/primase complex-associated protein (706 aa).

Positions 203 to 249 (CPGGDGGEEGDGAEGGDGGVGGAGDGAGAGGGSSGKPPAGKRGRPTR) are disordered. The span at 217 to 236 (GGDGGVGGAGDGAGAGGGSS) shows a compositional bias: gly residues.

This sequence belongs to the herpesviridae HEPA family. As to quaternary structure, associates with the primase and the helicase to form the helicase-primase complex. Interacts with the origin-binding protein. Interacts with the polymerase catalytic subunit.

The protein localises to the host nucleus. Functionally, component of the helicase/primase complex. Unwinds the DNA at the replication forks and generates single-stranded DNA for both leading and lagging strand synthesis. The primase synthesizes short RNA primers on the lagging strand that the polymerase presumably elongates using dNTPs. The primase-associated factor has no known catalytic activity in the complex and may serve to facilitate the formation of the replisome by directly interacting with the origin-binding protein and the polymerase. The polypeptide is DNA helicase/primase complex-associated protein (40) (Equus caballus (Horse)).